Consider the following 313-residue polypeptide: Protein phosphatase PTC7 homolog fig (313 aa).

The PPM-type phosphatase domain occupies 47-307 (KEPLTDLQLR…DDITVILASL (261 aa)). The Mn(2+) site is built by Asp83, Gly84, and Asp229.

It belongs to the PP2C family. Mg(2+) is required as a cofactor. Requires Mn(2+) as cofactor.

The catalysed reaction is O-phospho-L-seryl-[protein] + H2O = L-seryl-[protein] + phosphate. It carries out the reaction O-phospho-L-threonyl-[protein] + H2O = L-threonyl-[protein] + phosphate. The protein is Protein phosphatase PTC7 homolog fig of Drosophila virilis (Fruit fly).